Consider the following 362-residue polypeptide: Glutaminyl-peptide cyclotransferase (362 aa).

The first 35 residues, 1 to 35, serve as a signal peptide directing secretion; that stretch reads MAGSEDKRVVGTLHLLLLQATVLSLTAGNLSLVSA. N-linked (GlcNAc...) asparagine glycosylation is found at Asn-29 and Asn-50. A disulfide bond links Cys-140 and Cys-165. Asp-160 contributes to the Zn(2+) binding site. Glu-202 (proton acceptor) is an active-site residue. Glu-203 is a binding site for Zn(2+). The Proton acceptor role is filled by Asp-249. His-331 contributes to the Zn(2+) binding site.

This sequence belongs to the glutaminyl-peptide cyclotransferase family.

It is found in the secreted. The catalysed reaction is N-terminal L-glutaminyl-[peptide] = N-terminal 5-oxo-L-prolyl-[peptide] + NH4(+). Responsible for the biosynthesis of pyroglutamyl peptides. Has a bias against acidic and tryptophan residues adjacent to the N-terminal glutaminyl residue and a lack of importance of chain length after the second residue. This Mus musculus (Mouse) protein is Glutaminyl-peptide cyclotransferase (Qpct).